The following is a 695-amino-acid chain: ATP-dependent zinc metalloprotease FTSH 2, chloroplastic (695 aa).

The transit peptide at 1–47 directs the protein to the chloroplast; sequence MAASSACLVGNGLSVNTTTKQRLSKHFSGRQTSFSSVIRTSKVNVVK. Residues 48 to 82 constitute a thylakoid transit peptide; it reads ASLDGKKKQEGRRDFLKILLGNAGVGLVASGKANA. At 83–167 the chain is on the lumenal, thylakoid side; it reads DEQGVSSSRM…AHNAQEDQGS (85 aa). The helical transmembrane segment at 168 to 188 threads the bilayer; the sequence is VLFNLIGNLAFPALLIGGLFL. The Stromal portion of the chain corresponds to 189-695; the sequence is LSRRSGGGMG…PASAPTPAAV (507 aa). 267–274 contributes to the ATP binding site; that stretch reads GPPGTGKT. His-488 is a Zn(2+) binding site. Glu-489 is a catalytic residue. Residues His-492 and Asp-566 each contribute to the Zn(2+) site. Residues 673-695 are disordered; that stretch reads PPENRVPSSTTTTPASAPTPAAV. Low complexity predominate over residues 679–695; it reads PSSTTTTPASAPTPAAV.

This sequence in the N-terminal section; belongs to the AAA ATPase family. In the C-terminal section; belongs to the peptidase M41 family. Interacts with CHIP and FTSH5. Heterohexamers with FTSH1, FTSH5 and FTSH8. May also form homooligomers. It depends on Zn(2+) as a cofactor. The FTSH2 precursor is ubiquitinated by CHIP in the cytoplasm. In terms of tissue distribution, expressed in cotyledons, cauline and rosette leaves, stems, sepals, flovers and siliques. Very low in roots.

It localises to the plastid. The protein localises to the chloroplast thylakoid membrane. In terms of biological role, part of a complex that function as an ATP-dependent zinc metallopeptidase. Involved in the thylakoid formation and in the removal of damaged D1 in the photosystem II, preventing cell death under high-intensity light conditions, but not involved in thermotolerance. The chain is ATP-dependent zinc metalloprotease FTSH 2, chloroplastic (FTSH2) from Arabidopsis thaliana (Mouse-ear cress).